We begin with the raw amino-acid sequence, 95 residues long: Co-chaperonin GroES (95 aa).

This sequence belongs to the GroES chaperonin family. Heptamer of 7 subunits arranged in a ring. Interacts with the chaperonin GroEL.

Its subcellular location is the cytoplasm. In terms of biological role, together with the chaperonin GroEL, plays an essential role in assisting protein folding. The GroEL-GroES system forms a nano-cage that allows encapsulation of the non-native substrate proteins and provides a physical environment optimized to promote and accelerate protein folding. GroES binds to the apical surface of the GroEL ring, thereby capping the opening of the GroEL channel. The protein is Co-chaperonin GroES of Pelodictyon phaeoclathratiforme (strain DSM 5477 / BU-1).